Consider the following 202-residue polypeptide: LexA repressor (202 aa).

A DNA-binding region (H-T-H motif) is located at residues 28–48; sequence RAEIAQRLGFRSPNAAEEHLK. Active-site for autocatalytic cleavage activity residues include Ser-119 and Lys-156.

It belongs to the peptidase S24 family. As to quaternary structure, homodimer.

The enzyme catalyses Hydrolysis of Ala-|-Gly bond in repressor LexA.. Represses a number of genes involved in the response to DNA damage (SOS response), including recA and lexA. Binds to the 16 bp palindromic sequence 5'-CTGTATATATATACAG-3'. In the presence of single-stranded DNA, RecA interacts with LexA causing an autocatalytic cleavage which disrupts the DNA-binding part of LexA, leading to derepression of the SOS regulon and eventually DNA repair. The polypeptide is LexA repressor (Klebsiella pneumoniae subsp. pneumoniae (strain ATCC 700721 / MGH 78578)).